The primary structure comprises 168 residues: MANVEAKQQQPDLAEKLIAVNRVSKVVKGGRIFSFTALTVVGDGAGKVGFGYGKAREVPAAIQKAMEKARRNMINVDLNGNTLQHPVKGRHAGSQVFMKPASEGTGIIAGGAMRAVLEVTGVQNVLSKCYGSTNPINVVRATISALENMNSPQSIAAKRGLRIDEILG.

The S5 DRBM domain maps to 13-76 (LAEKLIAVNR…EKARRNMINV (64 aa)).

This sequence belongs to the universal ribosomal protein uS5 family. In terms of assembly, part of the 30S ribosomal subunit. Contacts proteins S4 and S8.

In terms of biological role, with S4 and S12 plays an important role in translational accuracy. Functionally, located at the back of the 30S subunit body where it stabilizes the conformation of the head with respect to the body. This Pseudoalteromonas translucida (strain TAC 125) protein is Small ribosomal subunit protein uS5.